The sequence spans 349 residues: tRNA pseudouridine synthase D (349 aa).

Phe27 contacts substrate. Asp80 (nucleophile) is an active-site residue. Residue Asn129 coordinates substrate. Positions Gly155–Leu303 constitute a TRUD domain. Phe329 contacts substrate.

Belongs to the pseudouridine synthase TruD family.

It catalyses the reaction uridine(13) in tRNA = pseudouridine(13) in tRNA. Responsible for synthesis of pseudouridine from uracil-13 in transfer RNAs. The polypeptide is tRNA pseudouridine synthase D (Escherichia coli O127:H6 (strain E2348/69 / EPEC)).